The sequence spans 156 residues: 6,7-dimethyl-8-ribityllumazine synthase (156 aa).

Residues Phe22, 57 to 59, and 81 to 83 contribute to the 5-amino-6-(D-ribitylamino)uracil site; these read AYE and TVI. 86–87 contributes to the (2S)-2-hydroxy-3-oxobutyl phosphate binding site; that stretch reads GT. Residue His89 is the Proton donor of the active site. 5-amino-6-(D-ribitylamino)uracil is bound at residue Phe114. Residue Arg128 participates in (2S)-2-hydroxy-3-oxobutyl phosphate binding.

Belongs to the DMRL synthase family. Forms an icosahedral capsid composed of 60 subunits, arranged as a dodecamer of pentamers.

It carries out the reaction (2S)-2-hydroxy-3-oxobutyl phosphate + 5-amino-6-(D-ribitylamino)uracil = 6,7-dimethyl-8-(1-D-ribityl)lumazine + phosphate + 2 H2O + H(+). The protein operates within cofactor biosynthesis; riboflavin biosynthesis; riboflavin from 2-hydroxy-3-oxobutyl phosphate and 5-amino-6-(D-ribitylamino)uracil: step 1/2. Functionally, catalyzes the formation of 6,7-dimethyl-8-ribityllumazine by condensation of 5-amino-6-(D-ribitylamino)uracil with 3,4-dihydroxy-2-butanone 4-phosphate. This is the penultimate step in the biosynthesis of riboflavin. This Citrobacter koseri (strain ATCC BAA-895 / CDC 4225-83 / SGSC4696) protein is 6,7-dimethyl-8-ribityllumazine synthase.